A 361-amino-acid polypeptide reads, in one-letter code: Biotin synthase (361 aa).

Positions 47-278 constitute a Radical SAM core domain; that stretch reads VHGDEVALCG…AAHIFVMGGR (232 aa). [4Fe-4S] cluster is bound by residues C65, C69, and C72. The [2Fe-2S] cluster site is built by S110, C143, and C203.

This sequence belongs to the radical SAM superfamily. Biotin synthase family. As to quaternary structure, homodimer. [4Fe-4S] cluster is required as a cofactor. It depends on [2Fe-2S] cluster as a cofactor.

The enzyme catalyses (4R,5S)-dethiobiotin + (sulfur carrier)-SH + 2 reduced [2Fe-2S]-[ferredoxin] + 2 S-adenosyl-L-methionine = (sulfur carrier)-H + biotin + 2 5'-deoxyadenosine + 2 L-methionine + 2 oxidized [2Fe-2S]-[ferredoxin]. It participates in cofactor biosynthesis; biotin biosynthesis; biotin from 7,8-diaminononanoate: step 2/2. In terms of biological role, catalyzes the conversion of dethiobiotin (DTB) to biotin by the insertion of a sulfur atom into dethiobiotin via a radical-based mechanism. In Anaeromyxobacter dehalogenans (strain 2CP-C), this protein is Biotin synthase.